Reading from the N-terminus, the 422-residue chain is Transcription termination factor Rho 1 (422 aa).

Residues 49–124 enclose the Rho RNA-BD domain; sequence AAIGGGVVEI…VKAHSINFTD (76 aa). ATP is bound by residues 173-178, 185-190, and Arg-216; these read GKGQRA and RAGKTI.

It belongs to the Rho family. As to quaternary structure, homohexamer. The homohexamer assembles into an open ring structure.

Functionally, facilitates transcription termination by a mechanism that involves Rho binding to the nascent RNA, activation of Rho's RNA-dependent ATPase activity, and release of the mRNA from the DNA template. The sequence is that of Transcription termination factor Rho 1 from Ehrlichia chaffeensis (strain ATCC CRL-10679 / Arkansas).